Reading from the N-terminus, the 394-residue chain is RILP-like protein 1 (394 aa).

The region spanning 2 to 89 is the RH1 domain; it reads EGISALEKNV…RLERMDRIEK (88 aa). A coiled-coil region spans residues 68–327; the sequence is EMEELRLELD…EAEEENKLPQ (260 aa). The 66-residue stretch at 282 to 347 folds into the RH2 domain; the sequence is RPRFTLQELR…IPQESGIKRL (66 aa).

The protein belongs to the RILPL family.

Its subcellular location is the cytoplasm. It is found in the cytosol. It localises to the cytoskeleton. The protein resides in the microtubule organizing center. The protein localises to the centrosome. Its subcellular location is the cell projection. It is found in the cilium. Plays a role in the regulation of cell shape and polarity. Plays a role in cellular protein transport, including protein transport away from primary cilia. Neuroprotective protein. The protein is RILP-like protein 1 (rilpl1) of Xenopus laevis (African clawed frog).